A 1412-amino-acid polypeptide reads, in one-letter code: DNA-directed RNA polymerase subunit beta' (1412 aa).

Positions 70, 72, 85, and 88 each coordinate Zn(2+). Mg(2+)-binding residues include Asp460, Asp462, and Asp464. Residues Cys819, Cys893, Cys900, and Cys903 each coordinate Zn(2+). The segment at 1393–1412 is disordered; sequence EAFEFGTPSAPAEEPQHPAE.

It belongs to the RNA polymerase beta' chain family. In terms of assembly, the RNAP catalytic core consists of 2 alpha, 1 beta, 1 beta' and 1 omega subunit. When a sigma factor is associated with the core the holoenzyme is formed, which can initiate transcription. It depends on Mg(2+) as a cofactor. Zn(2+) serves as cofactor.

It carries out the reaction RNA(n) + a ribonucleoside 5'-triphosphate = RNA(n+1) + diphosphate. In terms of biological role, DNA-dependent RNA polymerase catalyzes the transcription of DNA into RNA using the four ribonucleoside triphosphates as substrates. The sequence is that of DNA-directed RNA polymerase subunit beta' from Burkholderia mallei (strain NCTC 10229).